Consider the following 304-residue polypeptide: Glycine--tRNA ligase alpha subunit (304 aa).

The protein belongs to the class-II aminoacyl-tRNA synthetase family. In terms of assembly, tetramer of two alpha and two beta subunits.

It localises to the cytoplasm. It carries out the reaction tRNA(Gly) + glycine + ATP = glycyl-tRNA(Gly) + AMP + diphosphate. The protein is Glycine--tRNA ligase alpha subunit of Photorhabdus laumondii subsp. laumondii (strain DSM 15139 / CIP 105565 / TT01) (Photorhabdus luminescens subsp. laumondii).